Reading from the N-terminus, the 455-residue chain is Phosphoglucosamine mutase (455 aa).

Serine 102 serves as the catalytic Phosphoserine intermediate. Mg(2+)-binding residues include serine 102, aspartate 241, aspartate 243, and aspartate 245. At serine 102 the chain carries Phosphoserine.

It belongs to the phosphohexose mutase family. Mg(2+) is required as a cofactor. In terms of processing, activated by phosphorylation.

It carries out the reaction alpha-D-glucosamine 1-phosphate = D-glucosamine 6-phosphate. In terms of biological role, catalyzes the conversion of glucosamine-6-phosphate to glucosamine-1-phosphate. This Legionella pneumophila (strain Lens) protein is Phosphoglucosamine mutase.